The following is a 428-amino-acid chain: Divergent protein kinase domain 1A (428 aa).

Over 1-27 (MARGLFSRAWLSKTHHFQARLSYIRVK) the chain is Cytoplasmic. Residues 28 to 48 (YLFLTWLAVFVSSWVVYVQYS) traverse the membrane as a helical segment. Residues 49–428 (TYTELCRGRE…WKQISHTTDS (380 aa)) are Lumenal-facing.

Belongs to the DIPK family. Among the many cysteines in the lumenal domain, most are probably involved in disulfide bonds.

The protein resides in the endoplasmic reticulum membrane. This chain is Divergent protein kinase domain 1A (dipk1a), found in Danio rerio (Zebrafish).